A 242-amino-acid polypeptide reads, in one-letter code: ATP synthase subunit a (242 aa).

6 helical membrane passes run 29–49 (SSIY…LAFY), 84–104 (FIPL…LGMT), 114–134 (IIVT…VGFV), 140–160 (FLTL…MIVI), 181–201 (MAGH…MIYL), and 203–223 (FLPI…AILQ).

This sequence belongs to the ATPase A chain family. In terms of assembly, F-type ATPases have 2 components, CF(1) - the catalytic core - and CF(0) - the membrane proton channel. CF(1) has five subunits: alpha(3), beta(3), gamma(1), delta(1), epsilon(1). CF(0) has three main subunits: a(1), b(2) and c(9-12). The alpha and beta chains form an alternating ring which encloses part of the gamma chain. CF(1) is attached to CF(0) by a central stalk formed by the gamma and epsilon chains, while a peripheral stalk is formed by the delta and b chains.

It is found in the cell inner membrane. In terms of biological role, key component of the proton channel; it plays a direct role in the translocation of protons across the membrane. The sequence is that of ATP synthase subunit a from Rickettsia conorii (strain ATCC VR-613 / Malish 7).